Consider the following 476-residue polypeptide: Bifunctional protein HldE (476 aa).

A ribokinase region spans residues 1–319 (MKISLPAFEK…EALSLSHGES (319 aa)). 195-198 (NMSE) provides a ligand contact to ATP. Aspartate 264 is a catalytic residue. A cytidylyltransferase region spans residues 345 to 476 (MTNGCFDILH…AIIQNIMANQ (132 aa)).

This sequence in the N-terminal section; belongs to the carbohydrate kinase PfkB family. The protein in the C-terminal section; belongs to the cytidylyltransferase family. Homodimer.

The enzyme catalyses D-glycero-beta-D-manno-heptose 7-phosphate + ATP = D-glycero-beta-D-manno-heptose 1,7-bisphosphate + ADP + H(+). The catalysed reaction is D-glycero-beta-D-manno-heptose 1-phosphate + ATP + H(+) = ADP-D-glycero-beta-D-manno-heptose + diphosphate. It functions in the pathway nucleotide-sugar biosynthesis; ADP-L-glycero-beta-D-manno-heptose biosynthesis; ADP-L-glycero-beta-D-manno-heptose from D-glycero-beta-D-manno-heptose 7-phosphate: step 1/4. It participates in nucleotide-sugar biosynthesis; ADP-L-glycero-beta-D-manno-heptose biosynthesis; ADP-L-glycero-beta-D-manno-heptose from D-glycero-beta-D-manno-heptose 7-phosphate: step 3/4. In terms of biological role, catalyzes the phosphorylation of D-glycero-D-manno-heptose 7-phosphate at the C-1 position to selectively form D-glycero-beta-D-manno-heptose-1,7-bisphosphate. Its function is as follows. Catalyzes the ADP transfer from ATP to D-glycero-beta-D-manno-heptose 1-phosphate, yielding ADP-D-glycero-beta-D-manno-heptose. This is Bifunctional protein HldE from Shewanella pealeana (strain ATCC 700345 / ANG-SQ1).